An 881-amino-acid chain; its full sequence is Beta-mannosidase (881 aa).

Positions 1-18 are cleaved as a signal peptide; the sequence is MHLHLLFLLALCGAGCMA. N-linked (GlcNAc...) asparagine glycans are attached at residues Asn-35, Asn-77, Asn-89, and Asn-113. Cys-167 and Cys-176 are disulfide-bonded. 190 to 192 lines the substrate pocket; that stretch reads WDW. Asn-226, Asn-297, and Asn-302 each carry an N-linked (GlcNAc...) asparagine glycan. Asn-456 is a substrate binding site. The active-site Proton donor is Glu-457. 3 disulfide bridges follow: Cys-540–Cys-629, Cys-732–Cys-761, and Cys-764–Cys-769. The Nucleophile role is filled by Glu-554. The N-linked (GlcNAc...) asparagine glycan is linked to Asn-803.

Belongs to the glycosyl hydrolase 2 family. As to quaternary structure, monomer.

It localises to the lysosome. It catalyses the reaction Hydrolysis of terminal, non-reducing beta-D-mannose residues in beta-D-mannosides.. It participates in glycan metabolism; N-glycan degradation. Its function is as follows. Exoglycosidase that cleaves the single beta-linked mannose residue from the non-reducing end of all N-linked glycoprotein oligosaccharides. In Rattus norvegicus (Rat), this protein is Beta-mannosidase.